The sequence spans 135 residues: Phosphomevalonate dehydratase small subunit (135 aa).

Ser-67 (proton acceptor) is an active-site residue.

It belongs to the AcnX type II small subunit family. Heterodimer composed of a large subunit (PMDh-L) and a small subunit (PMDh-S).

It catalyses the reaction (R)-5-phosphomevalonate = (2E)-3-methyl-5-phosphooxypent-2-enoate + H2O. The protein operates within isoprenoid biosynthesis; isopentenyl diphosphate biosynthesis via mevalonate pathway. In terms of biological role, component of a hydro-lyase that catalyzes the dehydration of mevalonate 5-phosphate (MVA5P) to form trans-anhydromevalonate 5-phosphate (tAHMP). Involved in the archaeal mevalonate (MVA) pathway, which provides fundamental precursors for isoprenoid biosynthesis, such as isopentenyl diphosphate (IPP) and dimethylallyl diphosphate (DMAPP). The polypeptide is Phosphomevalonate dehydratase small subunit (Methanopyrus kandleri (strain AV19 / DSM 6324 / JCM 9639 / NBRC 100938)).